The following is a 424-amino-acid chain: WD-40 repeat-containing protein MSI3 (424 aa).

Residue methionine 1 is modified to N-acetylmethionine. WD repeat units lie at residues glycine 167–valine 207, glycine 216–glutamine 256, valine 259–histidine 299, lysine 303–leucine 343, and glycine 362–aspartate 402. A DWD box motif is present at residues isoleucine 233–arginine 249. The tract at residues methionine 394–lysine 424 is disordered. Positions glutamate 401 to glycine 412 are enriched in acidic residues. The segment covering asparagine 413–lysine 424 has biased composition (polar residues).

It belongs to the WD repeat RBAP46/RBAP48/MSI1 family.

The protein localises to the nucleus. Its function is as follows. Core histone-binding subunit that may target chromatin assembly factors, chromatin remodeling factors and histone deacetylases to their histone substrates in a manner that is regulated by nucleosomal DNA. This is WD-40 repeat-containing protein MSI3 (MSI3) from Arabidopsis thaliana (Mouse-ear cress).